A 187-amino-acid polypeptide reads, in one-letter code: Peptidyl-tRNA hydrolase (187 aa).

Tyr-14 contacts tRNA. His-19 (proton acceptor) is an active-site residue. Phe-60 and Asn-62 together coordinate tRNA.

This sequence belongs to the PTH family. In terms of assembly, monomer.

It localises to the cytoplasm. It carries out the reaction an N-acyl-L-alpha-aminoacyl-tRNA + H2O = an N-acyl-L-amino acid + a tRNA + H(+). In terms of biological role, hydrolyzes ribosome-free peptidyl-tRNAs (with 1 or more amino acids incorporated), which drop off the ribosome during protein synthesis, or as a result of ribosome stalling. Functionally, catalyzes the release of premature peptidyl moieties from peptidyl-tRNA molecules trapped in stalled 50S ribosomal subunits, and thus maintains levels of free tRNAs and 50S ribosomes. The polypeptide is Peptidyl-tRNA hydrolase (Pseudothermotoga lettingae (strain ATCC BAA-301 / DSM 14385 / NBRC 107922 / TMO) (Thermotoga lettingae)).